A 137-amino-acid polypeptide reads, in one-letter code: Small ribosomal subunit protein uS11 (137 aa).

Residues 116 to 137 (EDVTPVPSDSTRKKGGRRGRRL) are disordered. A compositionally biased stretch (basic residues) spans 128 to 137 (KKGGRRGRRL).

The protein belongs to the universal ribosomal protein uS11 family.

This Kluyveromyces lactis (strain ATCC 8585 / CBS 2359 / DSM 70799 / NBRC 1267 / NRRL Y-1140 / WM37) (Yeast) protein is Small ribosomal subunit protein uS11 (RPS14).